Consider the following 54-residue polypeptide: Potassium channel toxin alpha-KTx 14.3 (54 aa).

The signal sequence occupies residues 1-23 (MKIFFAILLILAVCSMAIWTVNG).

It belongs to the short scorpion toxin superfamily. Potassium channel inhibitor family. Alpha-KTx 14 subfamily. Post-translationally, contains 3 disulfide bridges. In terms of tissue distribution, expressed by the venom gland.

The protein resides in the secreted. Its function is as follows. Potential blocker of potassium channels. This is Potassium channel toxin alpha-KTx 14.3 from Olivierus martensii (Manchurian scorpion).